Consider the following 500-residue polypeptide: L-arabinose isomerase (500 aa).

Mn(2+)-binding residues include E306, E333, H350, and H450.

The protein belongs to the arabinose isomerase family. As to quaternary structure, homohexamer. It depends on Mn(2+) as a cofactor.

It catalyses the reaction beta-L-arabinopyranose = L-ribulose. It functions in the pathway carbohydrate degradation; L-arabinose degradation via L-ribulose; D-xylulose 5-phosphate from L-arabinose (bacterial route): step 1/3. Functionally, catalyzes the conversion of L-arabinose to L-ribulose. The protein is L-arabinose isomerase of Shigella flexneri.